Consider the following 174-residue polypeptide: Peptide deformylase (174 aa).

Positions 96 and 138 each coordinate Fe cation. E139 is a catalytic residue. Residue H142 coordinates Fe cation.

The protein belongs to the polypeptide deformylase family. The cofactor is Fe(2+).

It catalyses the reaction N-terminal N-formyl-L-methionyl-[peptide] + H2O = N-terminal L-methionyl-[peptide] + formate. Removes the formyl group from the N-terminal Met of newly synthesized proteins. Requires at least a dipeptide for an efficient rate of reaction. N-terminal L-methionine is a prerequisite for activity but the enzyme has broad specificity at other positions. This chain is Peptide deformylase, found in Helicobacter pylori (strain J99 / ATCC 700824) (Campylobacter pylori J99).